The following is an 847-amino-acid chain: Putative disease resistance RPP13-like protein 2 (847 aa).

Residues 26–42 (GVKDDLEELKTELTCIQ) are a coiled coil. The region spanning 142 to 446 (STSRVREVRR…AEGFIQEDEE (305 aa)) is the NB-ARC domain. 191 to 198 (GMEGLGKT) serves as a coordination point for ATP. 5 LRR repeats span residues 587 to 610 (LVHL…ISNL), 612 to 634 (FLQT…NLTS), 703 to 726 (LKNL…TVRF), 749 to 774 (FPSL…KLQR), and 807 to 830 (IKRL…NLDN).

The protein belongs to the disease resistance NB-LRR family. RPP13 subfamily.

Potential disease resistance protein. The sequence is that of Putative disease resistance RPP13-like protein 2 (RPP13L2) from Arabidopsis thaliana (Mouse-ear cress).